Here is a 435-residue protein sequence, read N- to C-terminus: MTDLTPREIVSELDRFIIGQKDAKRAVAVALRNRWRRKQLADDLRDEVYPKNILMIGPTGVGKTEISRRLAKLARAPFIKVEATKFTEVGYVGRDVEQIIRDLADAAIVQTRDYMRDEVRARAHKAAEDRVITAIAGEDAREGTREMFRKKLKSGELDDTVIELEVADGANPMPMFEIPGQPGGNMGMMNLGDLFGKAFAGRTTRKKLRVADSYEILIGEEADKLLDDELVNKTALEAVEQNGIVFLDEIDKVCARSDARGADVSREGVQRDLLPLIEGTTVSTKYGPIKTDHILFIASGAFHIAKPSDLLPELQGRLPIRVELRALTEEDFVRILTETDNALTLQYTALMGTENVAVTFTPDGIAALAHIAAEVNQSVENIGARRLYTVMERVFEELSFTAPDRSGEAVTVDAGFVDTNLGELTRSTDLSRYVL.

ATP contacts are provided by residues Ile-18, 60-65, Asp-248, Glu-313, and Arg-385; that span reads GVGKTE.

Belongs to the ClpX chaperone family. HslU subfamily. A double ring-shaped homohexamer of HslV is capped on each side by a ring-shaped HslU homohexamer. The assembly of the HslU/HslV complex is dependent on binding of ATP.

It localises to the cytoplasm. Functionally, ATPase subunit of a proteasome-like degradation complex; this subunit has chaperone activity. The binding of ATP and its subsequent hydrolysis by HslU are essential for unfolding of protein substrates subsequently hydrolyzed by HslV. HslU recognizes the N-terminal part of its protein substrates and unfolds these before they are guided to HslV for hydrolysis. The polypeptide is ATP-dependent protease ATPase subunit HslU (Ruegeria pomeroyi (strain ATCC 700808 / DSM 15171 / DSS-3) (Silicibacter pomeroyi)).